We begin with the raw amino-acid sequence, 301 residues long: Pantothenate synthetase (301 aa).

30–37 serves as a coordination point for ATP; that stretch reads MGNLHEGH. His37 functions as the Proton donor in the catalytic mechanism. Gln61 serves as a coordination point for (R)-pantoate. Residue Gln61 participates in beta-alanine binding. 149–152 is a binding site for ATP; sequence GEKD. Residue Gln155 coordinates (R)-pantoate. ATP-binding positions include Val178 and 186 to 189; that span reads MSSR.

It belongs to the pantothenate synthetase family. In terms of assembly, homodimer.

The protein localises to the cytoplasm. The enzyme catalyses (R)-pantoate + beta-alanine + ATP = (R)-pantothenate + AMP + diphosphate + H(+). Its pathway is cofactor biosynthesis; (R)-pantothenate biosynthesis; (R)-pantothenate from (R)-pantoate and beta-alanine: step 1/1. Functionally, catalyzes the condensation of pantoate with beta-alanine in an ATP-dependent reaction via a pantoyl-adenylate intermediate. This is Pantothenate synthetase from Vibrio vulnificus (strain YJ016).